Reading from the N-terminus, the 308-residue chain is ATP synthase gamma chain (308 aa).

It belongs to the ATPase gamma chain family. As to quaternary structure, F-type ATPases have 2 components, CF(1) - the catalytic core - and CF(0) - the membrane proton channel. CF(1) has five subunits: alpha(3), beta(3), gamma(1), delta(1), epsilon(1). CF(0) has three main subunits: a, b and c.

The protein localises to the cell membrane. Its function is as follows. Produces ATP from ADP in the presence of a proton gradient across the membrane. The gamma chain is believed to be important in regulating ATPase activity and the flow of protons through the CF(0) complex. The protein is ATP synthase gamma chain of Mycobacteroides abscessus (strain ATCC 19977 / DSM 44196 / CCUG 20993 / CIP 104536 / JCM 13569 / NCTC 13031 / TMC 1543 / L948) (Mycobacterium abscessus).